The sequence spans 139 residues: MKVLVTGGSGYIGSHTCVQLLQRGHEVVILDNLCNSKRRILPVIERLGGKEATFIEGDIRNEARMTEILHDHAIEAVIHFAGLKAVGESVAKPLEYYDNNVTGTLKLVSAMRAAGVKNFIFSSSATVYGDQPKIPYVES.

Residues 11–12, 31–36, 58–59, 80–84, Asn99, and Ser124 each bind NAD(+); these read YI, DNLCNS, DI, and FAGLK. Ser124 is a substrate binding site. Residue Tyr136 is the Proton acceptor of the active site.

The protein belongs to the NAD(P)-dependent epimerase/dehydratase family. In terms of assembly, homodimer. It depends on NAD(+) as a cofactor.

It catalyses the reaction UDP-alpha-D-glucose = UDP-alpha-D-galactose. It functions in the pathway carbohydrate metabolism; galactose metabolism. In terms of biological role, involved in the metabolism of galactose. Catalyzes the conversion of UDP-galactose (UDP-Gal) to UDP-glucose (UDP-Glc) through a mechanism involving the transient reduction of NAD. This Klebsiella pneumoniae protein is UDP-glucose 4-epimerase (galE).